The sequence spans 218 residues: Glutathione S-transferase Mu 7 (218 aa).

The GST N-terminal domain occupies 1 to 88; sequence MPMTLGYWDI…YLGRKHNLCG (88 aa). Glutathione is bound by residues 7-8, 46-50, 59-60, and 72-73; these read YW, WLNEK, NL, and QS. Residues 90-208 enclose the GST C-terminal domain; it reads TEEERIRVDI…KTSRFLPRPM (119 aa). Tyrosine 116 serves as a coordination point for substrate.

The protein belongs to the GST superfamily. Mu family. In terms of assembly, homodimer.

It is found in the cytoplasm. It carries out the reaction RX + glutathione = an S-substituted glutathione + a halide anion + H(+). Conjugation of reduced glutathione to a wide number of exogenous and endogenous hydrophobic electrophiles. The polypeptide is Glutathione S-transferase Mu 7 (Gstm7) (Mus musculus (Mouse)).